A 21-amino-acid polypeptide reads, in one-letter code: Cupiennin-6a (21 aa).

At S21 the chain carries Serine amide.

As to expression, expressed by the venom gland.

It localises to the secreted. The chain is Cupiennin-6a from Cupiennius salei (American wandering spider).